Reading from the N-terminus, the 239-residue chain is Probable transcriptional regulatory protein lmo0369 (239 aa).

The protein belongs to the TACO1 family. YeeN subfamily.

It is found in the cytoplasm. In Listeria monocytogenes serovar 1/2a (strain ATCC BAA-679 / EGD-e), this protein is Probable transcriptional regulatory protein lmo0369.